The chain runs to 84 residues: DNA-directed RNA polymerase subunit Rpo5 (84 aa).

It belongs to the archaeal Rpo5/eukaryotic RPB5 RNA polymerase subunit family. Part of the 13-subunit RNA polymerase.

It localises to the cytoplasm. The catalysed reaction is RNA(n) + a ribonucleoside 5'-triphosphate = RNA(n+1) + diphosphate. Its function is as follows. DNA-dependent RNA polymerase (RNAP) catalyzes the transcription of DNA into RNA using the four ribonucleoside triphosphates as substrates. Reconstitution experiments show this subunit is required for basic activity. This is DNA-directed RNA polymerase subunit Rpo5 from Sulfolobus acidocaldarius (strain ATCC 33909 / DSM 639 / JCM 8929 / NBRC 15157 / NCIMB 11770).